The primary structure comprises 214 residues: UPF0502 protein Spro_2794 (214 aa).

The protein belongs to the UPF0502 family.

The sequence is that of UPF0502 protein Spro_2794 from Serratia proteamaculans (strain 568).